A 188-amino-acid polypeptide reads, in one-letter code: GMP synthase [glutamine-hydrolyzing] subunit A (188 aa).

The region spanning 1 to 188 (MIVILNNGGQ…FCKVCGLLGE (188 aa)) is the Glutamine amidotransferase type-1 domain. Cys76 (nucleophile) is an active-site residue. Residues His163 and Glu165 contribute to the active site.

As to quaternary structure, heterodimer composed of a glutamine amidotransferase subunit (A) and a GMP-binding subunit (B).

The enzyme catalyses XMP + L-glutamine + ATP + H2O = GMP + L-glutamate + AMP + diphosphate + 2 H(+). It participates in purine metabolism; GMP biosynthesis; GMP from XMP (L-Gln route): step 1/1. In terms of biological role, catalyzes the synthesis of GMP from XMP. In Methanococcus aeolicus (strain ATCC BAA-1280 / DSM 17508 / OCM 812 / Nankai-3), this protein is GMP synthase [glutamine-hydrolyzing] subunit A.